The sequence spans 67 residues: Conotoxin Cal12.1p2 (67 aa).

Positions 1-21 (DLITNSYTRGKPRHVTSWRNL) are excised as a propeptide.

Post-translationally, contains 4 disulfide bonds. In terms of tissue distribution, expressed by the venom duct.

It is found in the secreted. This chain is Conotoxin Cal12.1p2, found in Californiconus californicus (California cone).